Here is a 299-residue protein sequence, read N- to C-terminus: Ribosomal RNA small subunit methyltransferase H (299 aa).

S-adenosyl-L-methionine-binding positions include 45-47 (GGH), aspartate 64, phenylalanine 92, aspartate 108, and glutamine 115. A disordered region spans residues 275-299 (PQSDEQAKNPRSRSAKLRLAQRKEQ). Positions 284-299 (PRSRSAKLRLAQRKEQ) are enriched in basic residues.

Belongs to the methyltransferase superfamily. RsmH family.

Its subcellular location is the cytoplasm. The catalysed reaction is cytidine(1402) in 16S rRNA + S-adenosyl-L-methionine = N(4)-methylcytidine(1402) in 16S rRNA + S-adenosyl-L-homocysteine + H(+). Functionally, specifically methylates the N4 position of cytidine in position 1402 (C1402) of 16S rRNA. The protein is Ribosomal RNA small subunit methyltransferase H of Gloeothece citriformis (strain PCC 7424) (Cyanothece sp. (strain PCC 7424)).